We begin with the raw amino-acid sequence, 492 residues long: 2,3-bisphosphoglycerate-independent phosphoglycerate mutase (492 aa).

Mn(2+)-binding residues include aspartate 11 and serine 61. Catalysis depends on serine 61, which acts as the Phosphoserine intermediate. Substrate is bound by residues histidine 118, 147-148, arginine 178, arginine 184, 248-251, and lysine 320; these read RD and RNDR. Mn(2+) is bound by residues aspartate 386, histidine 390, aspartate 427, histidine 428, and histidine 445.

The protein belongs to the BPG-independent phosphoglycerate mutase family. In terms of assembly, monomer. Mn(2+) is required as a cofactor.

The catalysed reaction is (2R)-2-phosphoglycerate = (2R)-3-phosphoglycerate. It participates in carbohydrate degradation; glycolysis; pyruvate from D-glyceraldehyde 3-phosphate: step 3/5. Its function is as follows. Catalyzes the interconversion of 2-phosphoglycerate and 3-phosphoglycerate. In Campylobacter jejuni subsp. jejuni serotype O:2 (strain ATCC 700819 / NCTC 11168), this protein is 2,3-bisphosphoglycerate-independent phosphoglycerate mutase.